A 278-amino-acid chain; its full sequence is Tryptophan synthase alpha chain (278 aa).

Active-site proton acceptor residues include Glu49 and Asp60.

The protein belongs to the TrpA family. Tetramer of two alpha and two beta chains.

It catalyses the reaction (1S,2R)-1-C-(indol-3-yl)glycerol 3-phosphate + L-serine = D-glyceraldehyde 3-phosphate + L-tryptophan + H2O. It participates in amino-acid biosynthesis; L-tryptophan biosynthesis; L-tryptophan from chorismate: step 5/5. Functionally, the alpha subunit is responsible for the aldol cleavage of indoleglycerol phosphate to indole and glyceraldehyde 3-phosphate. The chain is Tryptophan synthase alpha chain from Granulibacter bethesdensis (strain ATCC BAA-1260 / CGDNIH1).